The following is a 180-amino-acid chain: Fucolectin-3 (180 aa).

Positions 1 to 22 (MEVKMIILLFQILAISTLKSDS) are cleaved as a signal peptide. Positions 31 to 179 (QENVALRGRA…VEVNVLFPAP (149 aa)) are F5/8 type C-like. Ca(2+) contacts are provided by Asn58, Asp61, Asn63, and Ser72. 3 disulfides stabilise this stretch: Cys73-Cys168, Cys104-Cys105, and Cys130-Cys146. Positions 75 and 101 each coordinate alpha-L-fucose. Residues 101 to 103 (RGD) carry the Cell attachment site motif. Arg108 lines the alpha-L-fucose pocket. Ca(2+) contacts are provided by Cys168 and Glu169.

This sequence belongs to the fucolectin family. As to quaternary structure, homotrimer. Parenchymal hepatocytes.

The protein resides in the secreted. It is found in the extracellular space. Functionally, acts as a defensive agent. Recognizes blood group fucosylated oligosaccharides including A, B, H and Lewis B-type antigens. Does not recognize Lewis A antigen and has low affinity for monovalent haptens. The chain is Fucolectin-3 from Anguilla japonica (Japanese eel).